The primary structure comprises 76 residues: Putative membrane protein insertion efficiency factor (76 aa).

This sequence belongs to the UPF0161 family.

The protein localises to the cell inner membrane. Could be involved in insertion of integral membrane proteins into the membrane. This Anaeromyxobacter dehalogenans (strain 2CP-C) protein is Putative membrane protein insertion efficiency factor.